A 233-amino-acid chain; its full sequence is UPF0758 protein RoseRS_0767 (233 aa).

The 123-residue stretch at 107–229 (LIRSPTDAAQ…FVSMRERGLG (123 aa)) folds into the MPN domain. Positions 178, 180, and 191 each coordinate Zn(2+). A JAMM motif motif is present at residues 178-191 (HNHPSGDPTPSPED).

It belongs to the UPF0758 family.

The protein is UPF0758 protein RoseRS_0767 of Roseiflexus sp. (strain RS-1).